A 281-amino-acid polypeptide reads, in one-letter code: Bis(5'-nucleosyl)-tetraphosphatase, symmetrical (281 aa).

Belongs to the Ap4A hydrolase family.

It carries out the reaction P(1),P(4)-bis(5'-adenosyl) tetraphosphate + H2O = 2 ADP + 2 H(+). In terms of biological role, hydrolyzes diadenosine 5',5'''-P1,P4-tetraphosphate to yield ADP. The polypeptide is Bis(5'-nucleosyl)-tetraphosphatase, symmetrical (Acidovorax ebreus (strain TPSY) (Diaphorobacter sp. (strain TPSY))).